The chain runs to 726 residues: Catalase-peroxidase (726 aa).

The disordered stretch occupies residues 1-33 (MSTSDDIHNTTATGKCPFHQGGHDQSAGAGTTT). The segment at residues 105-226 (WHGAGTYRSI…LGATEMGLIY (122 aa)) is a cross-link (tryptophyl-tyrosyl-methioninium (Trp-Tyr) (with M-252)). Catalysis depends on histidine 106, which acts as the Proton acceptor. The tryptophyl-tyrosyl-methioninium (Tyr-Met) (with W-105) cross-link spans 226-252 (YVNPEGPDHSGEPLSAAAAIRATFGNM). Histidine 267 contributes to the heme b binding site.

It belongs to the peroxidase family. Peroxidase/catalase subfamily. In terms of assembly, homodimer or homotetramer. Requires heme b as cofactor. In terms of processing, formation of the three residue Trp-Tyr-Met cross-link is important for the catalase, but not the peroxidase activity of the enzyme.

The enzyme catalyses H2O2 + AH2 = A + 2 H2O. It catalyses the reaction 2 H2O2 = O2 + 2 H2O. Functionally, bifunctional enzyme with both catalase and broad-spectrum peroxidase activity. This is Catalase-peroxidase from Shigella sonnei (strain Ss046).